A 430-amino-acid chain; its full sequence is Adenylosuccinate synthetase (430 aa).

Residues 12–18 (GDEGKGK) and 40–42 (GHT) each bind GTP. Asp13 acts as the Proton acceptor in catalysis. Asp13 and Gly40 together coordinate Mg(2+). IMP-binding positions include 13–16 (DEGK), 38–41 (NAGH), Thr130, Arg144, Gln224, and Thr239. His41 (proton donor) is an active-site residue. Residues 277–297 (PFPTEQDNETGRKIGERGREF) form a disordered region. The segment covering 285-296 (ETGRKIGERGRE) has biased composition (basic and acidic residues). 299–305 (TNTGRPR) serves as a coordination point for substrate. Arg303 provides a ligand contact to IMP. GTP contacts are provided by residues Arg305, 331–333 (KLD), and 413–415 (STS).

The protein belongs to the adenylosuccinate synthetase family. As to quaternary structure, homodimer. It depends on Mg(2+) as a cofactor.

Its subcellular location is the cytoplasm. It carries out the reaction IMP + L-aspartate + GTP = N(6)-(1,2-dicarboxyethyl)-AMP + GDP + phosphate + 2 H(+). The protein operates within purine metabolism; AMP biosynthesis via de novo pathway; AMP from IMP: step 1/2. Functionally, plays an important role in the de novo pathway of purine nucleotide biosynthesis. Catalyzes the first committed step in the biosynthesis of AMP from IMP. The sequence is that of Adenylosuccinate synthetase from Bradyrhizobium sp. (strain ORS 278).